The primary structure comprises 378 residues: Transcription elongation factor TFIIS (378 aa).

An N-acetylmethionine modification is found at methionine 1. In terms of domain architecture, TFIIS N-terminal spans 10–89; the sequence is EGAKKAADAA…EIWKKVVIEE (80 aa). Positions 210 to 333 constitute a TFIIS central domain; it reads VRDKIRELLV…DCERGLAAKA (124 aa). Residues 336–376 form a TFIIS-type zinc finger; the sequence is DQFKCGRCGQRKCTYYQMQTRSADEPMTTYVTCVNCDNHWK. 4 residues coordinate Zn(2+): cysteine 340, cysteine 343, cysteine 368, and cysteine 371.

In terms of tissue distribution, expressed in roots, leaves and flowers.

The protein localises to the nucleus. Necessary for efficient RNA polymerase II transcription elongation past template-encoded arresting sites. Involved in the control of seed dormancy and germination. The chain is Transcription elongation factor TFIIS from Arabidopsis thaliana (Mouse-ear cress).